A 317-amino-acid chain; its full sequence is Protein translocase subunit SecF (317 aa).

The next 6 helical transmembrane spans lie at 11–31, 135–155, 166–186, 197–217, 244–266, and 276–298; these read FYLL…LFGL, RSIV…AFAF, ICAI…FAIL, LFVT…IVVF, LVRS…FFGG, and LLIG…LVSW.

It belongs to the SecD/SecF family. SecF subfamily. In terms of assembly, forms a complex with SecD. Part of the essential Sec protein translocation apparatus which comprises SecA, SecYEG and auxiliary proteins SecDF. Other proteins may also be involved.

Its subcellular location is the cell membrane. Its function is as follows. Part of the Sec protein translocase complex. Interacts with the SecYEG preprotein conducting channel. SecDF uses the proton motive force (PMF) to complete protein translocation after the ATP-dependent function of SecA. This is Protein translocase subunit SecF from Thermobaculum terrenum (strain ATCC BAA-798 / CCMEE 7001 / YNP1).